The chain runs to 67 residues: Large ribosomal subunit protein bL35 (67 aa).

It belongs to the bacterial ribosomal protein bL35 family.

This chain is Large ribosomal subunit protein bL35, found in Acidovorax ebreus (strain TPSY) (Diaphorobacter sp. (strain TPSY)).